A 157-amino-acid polypeptide reads, in one-letter code: Large ribosomal subunit protein uL11 (157 aa).

Belongs to the universal ribosomal protein uL11 family. Part of the ribosomal stalk of the 50S ribosomal subunit. Interacts with L10 and the large rRNA to form the base of the stalk. L10 forms an elongated spine to which L12 dimers bind in a sequential fashion forming a multimeric L10(L12)X complex.

Functionally, forms part of the ribosomal stalk which helps the ribosome interact with GTP-bound translation factors. The sequence is that of Large ribosomal subunit protein uL11 from Archaeoglobus fulgidus (strain ATCC 49558 / DSM 4304 / JCM 9628 / NBRC 100126 / VC-16).